Consider the following 160-residue polypeptide: Cytochrome b6-f complex subunit 4 (160 aa).

Transmembrane regions (helical) follow at residues 36 to 56 (ILYMFPICILGALGLIAGLAI), 95 to 115 (LLGIAGMAAIPLGLMLVPFIE), and 127 to 147 (PIAMTVFLFGTAAALWLGAGA).

The protein belongs to the cytochrome b family. PetD subfamily. In terms of assembly, the 4 large subunits of the cytochrome b6-f complex are cytochrome b6, subunit IV (17 kDa polypeptide, PetD), cytochrome f and the Rieske protein, while the 4 small subunits are PetG, PetL, PetM and PetN. The complex functions as a dimer.

It localises to the cellular thylakoid membrane. Functionally, component of the cytochrome b6-f complex, which mediates electron transfer between photosystem II (PSII) and photosystem I (PSI), cyclic electron flow around PSI, and state transitions. The protein is Cytochrome b6-f complex subunit 4 of Synechocystis sp. (strain ATCC 27184 / PCC 6803 / Kazusa).